The chain runs to 468 residues: Phosphoglucosamine mutase (468 aa).

The Phosphoserine intermediate role is filled by Ser-112. Ser-112, Asp-254, Asp-256, and Asp-258 together coordinate Mg(2+). Position 112 is a phosphoserine (Ser-112).

Belongs to the phosphohexose mutase family. The cofactor is Mg(2+). Activated by phosphorylation.

The catalysed reaction is alpha-D-glucosamine 1-phosphate = D-glucosamine 6-phosphate. In terms of biological role, catalyzes the conversion of glucosamine-6-phosphate to glucosamine-1-phosphate. This is Phosphoglucosamine mutase from Prochlorococcus marinus (strain MIT 9313).